A 350-amino-acid chain; its full sequence is Probable nicotinate-nucleotide adenylyltransferase/Ap4A hydrolase (350 aa).

The segment at 1 to 187 is naMN adenylyltransferase; sequence MKQKIIIFGG…YINTNHLYLI (187 aa). The tract at residues 196 to 350 is ap4A hydrolase; sequence DKRFQHCLRV…LKYVQNLVKD (155 aa). Residues 198-310 enclose the HD domain; the sequence is RFQHCLRVGK…VYLADKLEPN (113 aa). His201 is a binding site for ADP. Fe cation contacts are provided by His201, His230, and Asp231. ADP-binding positions include 231 to 234, His261, 287 to 288, Asp305, and Arg311; these read DLAK and HT. Asp305 serves as a coordination point for Fe cation.

The protein in the N-terminal section; belongs to the NadD family. It in the C-terminal section; belongs to the Ap4A hydrolase YqeK family.

It catalyses the reaction nicotinate beta-D-ribonucleotide + ATP + H(+) = deamido-NAD(+) + diphosphate. It carries out the reaction P(1),P(4)-bis(5'-adenosyl) tetraphosphate + H2O = 2 ADP + 2 H(+). The protein operates within cofactor biosynthesis; NAD(+) biosynthesis; deamido-NAD(+) from nicotinate D-ribonucleotide: step 1/1. Functionally, catalyzes the reversible adenylation of nicotinate mononucleotide (NaMN) to nicotinic acid adenine dinucleotide (NaAD). Its function is as follows. Hydrolyzes diadenosine 5',5'''-P1,P4-tetraphosphate (Ap4A) to yield ADP. This is Probable nicotinate-nucleotide adenylyltransferase/Ap4A hydrolase from Mycoplasma genitalium (strain ATCC 33530 / DSM 19775 / NCTC 10195 / G37) (Mycoplasmoides genitalium).